Consider the following 738-residue polypeptide: MKRTLPTLSALALSMSLALAAGQTQAAETTTNSYWWPEQLDLSPLRQHGSESNPYGADYDYAKAFGSLDLVAVKADIKTVLTTSQDWWPADYGHYGPFFIRMAWHSAGVYRIFDGRGGASGGQQRFEPLNSWPDNVNLDKARRLLWPIKQKYGSKISWADLMVLAGNVSLESMGFKTFGFAGGRTDDWEAERVDWGHEKKWLDNKRHNEKGELAKPLGATQMGLIYVNPEGPNGVPDPLAAARDIRETFGRMAMNDEETVALIAGGHTFGKAHGAHDPAKCVGADPAAAGVEAQGLGWKNKCGKGHSEDTVTSGLEGAWSVSPTQWTMQYLDNLYGFEWVQSKSPAGHIQWIPANGAGDNLVPDAHVAGKRHAPIMFTTDIALKEDPSYREITSRFRKDPKAFELAFAKAWFKLTHRDMGPKTRYLGSDVPAEALIWQDPIPALDHAVIDTNDIAALKSAILASGIAVPELVRTAWASAASFRGTDMRGGANGARLRLEPQRSWEVNNPEELAKVLPKLEKIQKDFNKSLKGGKKVSLADVIVLAGGTAIEQAARSAGYSVTVPFTPGRMDATTAQTDVSSFAVLEPKADAFRNFFSEESYLPPAEALVEKATQLTLSVPEMTALVGGLRVLDANSNKAKHGVFTDKPGNLSNDFFVNLLDMSTRWEKSPREAGLYQGFDRQSGKLRWTATPVDLIFGSHAELRAVAEVYGANDGKDRFVEDFIAAWTKVMNLDRFDI.

The signal sequence occupies residues 1–26; sequence MKRTLPTLSALALSMSLALAAGQTQA. The segment at residues 104–226 is a cross-link (tryptophyl-tyrosyl-methioninium (Trp-Tyr) (with M-252)); that stretch reads WHSAGVYRIF…LGATQMGLIY (123 aa). His105 functions as the Proton acceptor in the catalytic mechanism. Residues 226 to 252 constitute a cross-link (tryptophyl-tyrosyl-methioninium (Tyr-Met) (with W-104)); it reads YVNPEGPNGVPDPLAAARDIRETFGRM. Residue His267 participates in heme b binding.

It belongs to the peroxidase family. Peroxidase/catalase subfamily. Homodimer or homotetramer. Requires heme b as cofactor. Formation of the three residue Trp-Tyr-Met cross-link is important for the catalase, but not the peroxidase activity of the enzyme.

It catalyses the reaction H2O2 + AH2 = A + 2 H2O. It carries out the reaction 2 H2O2 = O2 + 2 H2O. In terms of biological role, bifunctional enzyme with both catalase and broad-spectrum peroxidase activity. The protein is Catalase-peroxidase 2 of Shewanella amazonensis (strain ATCC BAA-1098 / SB2B).